Reading from the N-terminus, the 571-residue chain is Urease subunit alpha (571 aa).

The 439-residue stretch at 133-571 (GGIDTHVHFI…LPLTQRYFLF (439 aa)) folds into the Urease domain. His138, His140, and Lys221 together coordinate Ni(2+). Lys221 is modified (N6-carboxylysine). A substrate-binding site is contributed by His223. Positions 250 and 276 each coordinate Ni(2+). Catalysis depends on His324, which acts as the Proton donor. Residue Asp364 coordinates Ni(2+).

Belongs to the metallo-dependent hydrolases superfamily. Urease alpha subunit family. As to quaternary structure, heterotrimer of UreA (gamma), UreB (beta) and UreC (alpha) subunits. Three heterotrimers associate to form the active enzyme. Requires Ni cation as cofactor. Carboxylation allows a single lysine to coordinate two nickel ions.

It localises to the cytoplasm. It catalyses the reaction urea + 2 H2O + H(+) = hydrogencarbonate + 2 NH4(+). Its pathway is nitrogen metabolism; urea degradation; CO(2) and NH(3) from urea (urease route): step 1/1. This Staphylococcus saprophyticus subsp. saprophyticus (strain ATCC 15305 / DSM 20229 / NCIMB 8711 / NCTC 7292 / S-41) protein is Urease subunit alpha.